We begin with the raw amino-acid sequence, 376 residues long: Glutamate 5-kinase (376 aa).

Residue lysine 16 coordinates ATP. The substrate site is built by serine 56, aspartate 143, and asparagine 155. 175 to 176 contacts ATP; sequence TD. One can recognise a PUA domain in the interval 283-361; the sequence is RGALSLDEGA…RDIETTLGYV (79 aa).

The protein belongs to the glutamate 5-kinase family.

The protein resides in the cytoplasm. It catalyses the reaction L-glutamate + ATP = L-glutamyl 5-phosphate + ADP. It functions in the pathway amino-acid biosynthesis; L-proline biosynthesis; L-glutamate 5-semialdehyde from L-glutamate: step 1/2. In terms of biological role, catalyzes the transfer of a phosphate group to glutamate to form L-glutamate 5-phosphate. This Halorhodospira halophila (strain DSM 244 / SL1) (Ectothiorhodospira halophila (strain DSM 244 / SL1)) protein is Glutamate 5-kinase.